The chain runs to 268 residues: MSRFETQFATLNAKNEGAFVPFVTLCDPTFDCSFEIICTLVDNGADALELGFPFSDPLLDGPVIQAANNRALTAGHSSEDSFKLLEKVRSKYPEIPISLLLCANLIFAKGLDAFYQRCAEVGVDAVLVADIPLLAKEDYVQAAKKHGIQPVFICPPNADEKTIQGVAKNSEGYTYLVSRAGVTSAENQAHAANLDTLVEQLKAHYAPPILQGFGIAQPAQVKEALALGAAGAISGSATVKIIERNLDNHEQCLAELAEFVQTMKAATK.

Active-site proton acceptor residues include glutamate 49 and aspartate 60.

It belongs to the TrpA family. Tetramer of two alpha and two beta chains.

It catalyses the reaction (1S,2R)-1-C-(indol-3-yl)glycerol 3-phosphate + L-serine = D-glyceraldehyde 3-phosphate + L-tryptophan + H2O. Its pathway is amino-acid biosynthesis; L-tryptophan biosynthesis; L-tryptophan from chorismate: step 5/5. Its function is as follows. The alpha subunit is responsible for the aldol cleavage of indoleglycerol phosphate to indole and glyceraldehyde 3-phosphate. In Haemophilus influenzae (strain 86-028NP), this protein is Tryptophan synthase alpha chain.